The primary structure comprises 1778 residues: Nuclear receptor corepressor 1 (1778 aa).

Residues 125 to 176 enclose the SANT domain; that stretch reads DRLEEWSPEERSLFKSRQADHVKIFHGLTEFFVDKTASDLVLFYYMNKKTED. Residues 356–398 enclose the Myb-like domain; the sequence is WTDDEKTKLVTLINSSPTLDWVSISEGMNRRPNECKMQYDAMN. Over residues 409-421 the composition is skewed to acidic residues; the sequence is VDEEDGNGQEEGG. Disordered regions lie at residues 409 to 671, 992 to 1024, 1195 to 1218, 1276 to 1339, 1414 to 1434, and 1646 to 1718; these read VDEE…TVST, SLTP…AGRS, KLQQ…ATPQ, QHLQ…SRSV, PPKT…RTLS, and AAPT…PPLP. Low complexity-rich tracts occupy residues 431–442 and 450–469; these read SSAAARRSGLAR and TPRA…VTRA. The segment covering 478–493 has biased composition (acidic residues); it reads DLGEEIDEMEIEDNDE. A compositionally biased stretch (basic and acidic residues) spans 494 to 513; it reads DASRGSRGKDSKAPSDRDGS. Composition is skewed to acidic residues over residues 517–545 and 599–616; these read MEGD…EEEE and ESDD…DVDE. Low complexity-rich tracts occupy residues 626–639 and 649–671; these read SSSS…SVGG and LVQQ…TVST. A compositionally biased stretch (low complexity) spans 1276–1285; it reads QHLQQQQQHH. Positions 1687 to 1696 are enriched in low complexity; that stretch reads SSVNSNVSDV.

The protein belongs to the N-CoR nuclear receptor corepressors family. As to quaternary structure, interacts with gex-3. Interacts (via C-terminus) with nhr-60. In larvae, expressed in pharyngeal neurons, ventral and dorsal nerve cords, tail neurons, egg-laying neurons and egg-laying muscles. Detected in the neurons of the pharyngeal nerve ring, head neurons, tail neurons and egg-laying muscles in adults. Detected in male-specific tail ganglia and rays in males.

The protein resides in the nucleus. Its function is as follows. Mediates transcriptional repression by certain nuclear receptors. Plays a role in development and neuronal function. May play a role in muscle-specific oxidative mitochondrial metabolism. The polypeptide is Nuclear receptor corepressor 1 (Caenorhabditis elegans).